Here is a 307-residue protein sequence, read N- to C-terminus: Taste receptor type 2 member 10 (307 aa).

Residues 1–6 (MLRVVE) lie on the Extracellular side of the membrane. Residues 7 to 27 (GIFIFVVISEXVFGVLGNGFI) form a helical membrane-spanning segment. The Cytoplasmic segment spans residues 28 to 42 (GLVNCIDCAKNKLST). Residues 43–63 (IGFILTGLAISRIFLIWIIIT) form a helical membrane-spanning segment. The Extracellular segment spans residues 64–100 (DGFIQIFSPDIYASGNLIEYISYFWVIGNQSSMWFAT). N-linked (GlcNAc...) asparagine glycosylation is present at asparagine 92. Residues 101–121 (SLSIFYFLKIANFSNYIFLWL) traverse the membrane as a helical segment. Residues 122–126 (KSRTN) are Cytoplasmic-facing. A helical membrane pass occupies residues 127 to 147 (MVLPFMIVFLLISSLLNFAHI). The Extracellular portion of the chain corresponds to 148 to 179 (AKILNDYKMKNDTVWDLNMYKSEYFIKQILLN). An N-linked (GlcNAc...) asparagine glycan is attached at asparagine 158. The helical transmembrane segment at 180-200 (LGVIFFFTLSLITCVFLIISL) threads the bilayer. Topologically, residues 201-227 (WRHNRQMQSNVTGLRDSNTEAHVKAMK) are cytoplasmic. The chain crosses the membrane as a helical span at residues 228 to 248 (VLISFXILFILYFIGMAIEIS). Topologically, residues 249-257 (CFTVRENKL) are extracellular. Residues 258-278 (LLMFGMTTTAIYPWGHSFILI) traverse the membrane as a helical segment. The Cytoplasmic segment spans residues 279–307 (LGNSKLKQASLRVLQQLKCCEKRKNLRVT).

Belongs to the G-protein coupled receptor T2R family.

It localises to the membrane. Its function is as follows. Receptor that may play a role in the perception of bitterness and is gustducin-linked. May play a role in sensing the chemical composition of the gastrointestinal content. The activity of this receptor may stimulate alpha gustducin, mediate PLC-beta-2 activation and lead to the gating of TRPM5. The chain is Taste receptor type 2 member 10 (TAS2R10) from Gorilla gorilla gorilla (Western lowland gorilla).